The following is a 503-amino-acid chain: Methylthioalkylmalate synthase 3, chloroplastic (503 aa).

A chloroplast-targeting transit peptide spans 1–51 (MASLLLTSSSMITTSCRSMVLRSGLPIGSSFPSLRLTRPYDKATLFVSCCS). The region spanning 85-359 (VRVLDTTLRD…YTKIDSRQIM (275 aa)) is the Pyruvate carboxyltransferase domain.

It belongs to the alpha-IPM synthase/homocitrate synthase family. Mn(2+) is required as a cofactor. As to expression, highly expressed in roots, leaves, and siliques. Lower amounts in stems and flowers.

It is found in the plastid. Its subcellular location is the chloroplast. It catalyses the reaction an omega-(methylsulfanyl)-2-oxoalkanoate + acetyl-CoA + H2O = a 2-(omega-methylsulfanyl)alkylmalate + CoA + H(+). Not activated by ATP. Determines the side chain length of aliphatic glucosinolate structures. Accepts all the omega-methylthio-2-oxoalkanoic acids needed to form the known C3 to C8 glucosinolates. Also able to convert pyruvate to citramalate, 2-oxoisovalerate to isopropylmalate, 4-methyl-2-oxopentanoate and 5-methyl-2-oxohexanoate for Leu-derived glucosinolates, 3-methyl-2-oxopentanoate for Ile-derived glucosinolates and phenylpyruvate to phenylethylglucosinolate. The chain is Methylthioalkylmalate synthase 3, chloroplastic (MAM3) from Arabidopsis thaliana (Mouse-ear cress).